Reading from the N-terminus, the 205-residue chain is Regulator of G-protein signaling 4 (205 aa).

3 S-palmitoyl cysteine lipidation sites follow: cysteine 2, cysteine 12, and cysteine 95. The RGS domain maps to 62-178 (SLENLISHEC…LKSRFYLDLV (117 aa)).

In terms of processing, palmitoylated on Cys-2 and/or Cys-12. Phosphorylated by cyclic GMP-dependent protein kinase.

Its function is as follows. Inhibits signal transduction by increasing the GTPase activity of G protein alpha subunits thereby driving them into their inactive GDP-bound form. Activity on G(z)-alpha is inhibited by phosphorylation of the G-protein. Activity on G(z)-alpha and G(i)-alpha-1 is inhibited by palmitoylation of the G-protein. This Pongo abelii (Sumatran orangutan) protein is Regulator of G-protein signaling 4 (RGS4).